Consider the following 358-residue polypeptide: Isopentenyl-diphosphate delta-isomerase (358 aa).

12–13 contributes to the substrate binding site; the sequence is RK. Residues 69-71, serine 99, and asparagine 128 contribute to the FMN site; that span reads AMT. Glutamine 158 lines the substrate pocket. Glutamate 159 contacts Mg(2+). FMN contacts are provided by residues lysine 190, threonine 220, 267–269, and 288–289; these read GIR and AG.

It belongs to the IPP isomerase type 2 family. As to quaternary structure, homooctamer. Dimer of tetramers. It depends on FMN as a cofactor. NADPH is required as a cofactor. The cofactor is Mg(2+).

The protein resides in the cytoplasm. The catalysed reaction is isopentenyl diphosphate = dimethylallyl diphosphate. In terms of biological role, involved in the biosynthesis of isoprenoids. Catalyzes the 1,3-allylic rearrangement of the homoallylic substrate isopentenyl (IPP) to its allylic isomer, dimethylallyl diphosphate (DMAPP). This Listeria welshimeri serovar 6b (strain ATCC 35897 / DSM 20650 / CCUG 15529 / CIP 8149 / NCTC 11857 / SLCC 5334 / V8) protein is Isopentenyl-diphosphate delta-isomerase.